The following is a 61-amino-acid chain: Metallothionein-I, hippocampal (61 aa).

The residue at position 1 (M1) is an N-acetylmethionine. Residues 1–29 are beta; that stretch reads MDPNCSCATGDSCACASTCKCKECKCTSC. Residues C5, C7, C13, C15, C19, C21, C24, C26, C29, C33, C34, C36, C37, C41, C44, C48, C50, and C57 each coordinate a divalent metal cation. The tract at residues 30-61 is alpha; sequence KKSCCSCCPVGCAKCAQGCICKGASDKCSCCA. S58 is subject to Phosphoserine. C59 and C60 together coordinate a divalent metal cation.

The protein belongs to the metallothionein superfamily. Type 1 family.

Metallothioneins have a high content of cysteine residues that bind various heavy metals; these proteins are transcriptionally regulated by both heavy metals and glucocorticoids. This isoform may play a role in regulating the transport, accumulation, and compartmentation of zinc in the hippocampus. This Bos taurus (Bovine) protein is Metallothionein-I, hippocampal.